Consider the following 92-residue polypeptide: Large ribosomal subunit protein bL25 (92 aa).

This sequence belongs to the bacterial ribosomal protein bL25 family. In terms of assembly, part of the 50S ribosomal subunit; part of the 5S rRNA/L5/L18/L25 subcomplex. Contacts the 5S rRNA. Binds to the 5S rRNA independently of L5 and L18.

In terms of biological role, this is one of the proteins that binds to the 5S RNA in the ribosome where it forms part of the central protuberance. The polypeptide is Large ribosomal subunit protein bL25 (Photobacterium damsela subsp. piscicida (Pasteurella piscicida)).